The primary structure comprises 425 residues: Histone-binding protein RBBP4 (425 aa).

Ala2 is modified (N-acetylalanine). Lys4 bears the N6-acetyllysine; alternate mark. Lys4 is covalently cross-linked (Glycyl lysine isopeptide (Lys-Gly) (interchain with G-Cter in SUMO2); alternate). Lys4 is covalently cross-linked (Glycyl lysine isopeptide (Lys-Gly) (interchain with G-Cter in ubiquitin); alternate). 7 WD repeats span residues 32 to 125 (YDLV…NHEG), 126 to 175 (EVNR…RLRG), 176 to 223 (HQKE…KTIF), 225 to 270 (GHTA…HSVD), 271 to 314 (AHTA…HSFE), 315 to 371 (SHKD…FIHG), and 372 to 404 (GHTAKISDFSWNPNEPWVICSVSEDNIMQVWQM). Position 110 is a phosphoserine (Ser110). Lys160 carries the N6-acetyllysine; alternate modification. Lys160 participates in a covalent cross-link: Glycyl lysine isopeptide (Lys-Gly) (interchain with G-Cter in SUMO2); alternate. Phosphoserine is present on Ser355.

The protein belongs to the WD repeat RBAP46/RBAP48/MSI1 family. As to quaternary structure, binds directly to helix 1 of the histone fold of histone H4, a region that is not accessible when H4 is in chromatin. Subunit of the chromatin assembly factor 1 (CAF-1) complex, which is composed of RBBP4, CHAF1B and CHAF1A. Subunit of the core histone deacetylase (HDAC) complex, which is composed of HDAC1, HDAC2, RBBP4 and RBBP7. The core HDAC complex associates with SIN3A, ARID4B/SAP180, SAP18, SAP30, SAP130, SUDS3/SAP45 and possibly ARID4A/RBP1 and ING1 to form the SIN3 HDAC complex. Component of the nucleosome remodeling and deacetylase (NuRD) repressor complex, composed of core proteins MTA1, MTA2, MTA3, RBBP4, RBBP7, HDAC1, HDAC2, MBD2, MBD3, and peripherally associated proteins CDK2AP1, CDK2AP2, GATAD2A, GATAD2B, CHD3, CHD4 and CHD5. The exact stoichiometry of the NuRD complex is unknown, and some subunits such as MBD2 and MBD3, GATAD2A and GATAD2B, and CHD3, CHD4 and CHD5 define mutually exclusive NuRD complexes. Interacts with ZNF512B; the interaction is direct and may play a role in repressing gene expression. The NuRD complex may also interact with MBD3L1 and MBD3L2. Component of the PRC2 complex, which consists of the core subunits EED, EZH1 or EZH2, SUZ12, and RBBP4, and various combinations of accessory subunits including AEBP2, JARID2, PHF19, MTF2 and EPOP. Forms a monomeric PRC2.2 (class 2) complex consisting of at least SUZ12, RBBP4, AEBP2 and JARID2. Forms a dimeric PRC2.1 (class 1, PRC-PCL) complex consisting of at least SUZ12, RBBP4, and PHF19; PHF19 stabilizes the dimeric structure which enhances PRC2 interaction with chromatin. Component of the NURF-1 ISWI chromatin remodeling complex (also called the nucleosome-remodeling factor (NURF) complex) at least composed of SMARCA1 (isoform 2), BPTF, RBBP4 and RBBP7. Within the complex interacts with isoform 2 of SMARCA1. Component of the BPFT-SMARCA1 complex at least composed of SMARCA1 (isoform 1), BPFT, RBBP4 and RBBP7; the complex is catalytically inactive and does not remodel chromatin. Within the complex interacts with isoform 1 of SMARCA1. Interacts with the ISWI chromatin remodeling complex component SMARCA5; the interaction is direct. Interacts with the viral protein-binding domain of the retinoblastoma protein (RB1). Component of the DREAM complex (also named LINC complex) at least composed of E2F4, E2F5, LIN9, LIN37, LIN52, LIN54, MYBL1, MYBL2, RBL1, RBL2, RBBP4, TFDP1 and TFDP2. The complex exists in quiescent cells where it represses cell cycle-dependent genes. It dissociates in S phase when LIN9, LIN37, LIN52 and LIN54 form a subcomplex that binds to MYBL2. Found in a complex composed of at least SINHCAF, SIN3A, HDAC1, SAP30, RBBP4, OGT and TET1. Interacts with ZNF827; the interaction is direct and recruits RBBP4 to telomeres. Interacts with MTA1; the interaction is direct and mutually exclusive with binding histone H4. Interacts with ARMC12 (via ARM domains). Interacts with BRCA1. Interacts with CDK2AP1. Interacts with CREBBP, and this interaction may be enhanced by the binding of phosphorylated CREB1 to CREBBP. Interacts with ERCC6. Interacts with HDAC7. Interacts with PHF6. Interacts with PWWP2B. Interacts with SPEN/MINT. Interacts with SUV39H1.

It localises to the nucleus. The protein localises to the chromosome. The protein resides in the telomere. In terms of biological role, core histone-binding subunit that may target chromatin assembly factors, chromatin remodeling factors and histone deacetylases to their histone substrates in a manner that is regulated by nucleosomal DNA. Component of the chromatin assembly factor 1 (CAF-1) complex, which is required for chromatin assembly following DNA replication and DNA repair. Component of the core histone deacetylase (HDAC) complex, which promotes histone deacetylation and consequent transcriptional repression. Component of the nucleosome remodeling and histone deacetylase complex (the NuRD complex), which promotes transcriptional repression by histone deacetylation and nucleosome remodeling. Component of the PRC2 complex, which promotes repression of homeotic genes during development. Component of the NURF (nucleosome remodeling factor) complex. The protein is Histone-binding protein RBBP4 (RBBP4) of Bos taurus (Bovine).